Reading from the N-terminus, the 703-residue chain is Ion-translocating oxidoreductase complex subunit C (703 aa).

4Fe-4S ferredoxin-type domains are found at residues 369–398 and 408–437; these read YDPQ…QQMY and KSNQ…IQYF. Residues Cys-378, Cys-381, Cys-384, Cys-388, Cys-417, Cys-420, Cys-423, and Cys-427 each contribute to the [4Fe-4S] cluster site. Disordered stretches follow at residues 467-542 and 555-680; these read RLER…PDNS and RQQT…PKKA. Residues 485–497 are compositionally biased toward basic and acidic residues; it reads ARREELAANKGED. Low complexity predominate over residues 559 to 577; that stretch reads NGNSPVSSASNSDSATISA. A compositionally biased stretch (polar residues) spans 578–592; sequence DNTHSTPKTAQNQTA. Composition is skewed to low complexity over residues 598–629 and 641–669; these read AAVA…TEKT and AAVA…EKTA.

This sequence belongs to the 4Fe4S bacterial-type ferredoxin family. RnfC subfamily. The complex is composed of six subunits: RnfA, RnfB, RnfC, RnfD, RnfE and RnfG. [4Fe-4S] cluster is required as a cofactor.

It is found in the cell inner membrane. In terms of biological role, part of a membrane-bound complex that couples electron transfer with translocation of ions across the membrane. This is Ion-translocating oxidoreductase complex subunit C from Actinobacillus succinogenes (strain ATCC 55618 / DSM 22257 / CCUG 43843 / 130Z).